Here is an 86-residue protein sequence, read N- to C-terminus: MLRLVLLLLATDFAASDDSLDSSDSQLIKRSQFRTPDCHRFDYPVCSKHLSPVCGTDMNTYGNECTLCMKIREDGSHINIIKDEPC.

An N-terminal signal peptide occupies residues 1 to 16 (MLRLVLLLLATDFAAS). Residues 32–86 (QFRTPDCHRFDYPVCSKHLSPVCGTDMNTYGNECTLCMKIREDGSHINIIKDEPC) form the Kazal-like domain. Intrachain disulfides connect Cys-38–Cys-68, Cys-46–Cys-65, and Cys-54–Cys-86.

It is found in the secreted. The protein localises to the cytoplasmic vesicle. Its subcellular location is the secretory vesicle. The protein resides in the acrosome. Functionally, as a strong inhibitor of acrosin, it is required for normal spermiogenesis. It probably hinders premature activation of proacrosin and other proteases, thus preventing the cascade of events leading to spermiogenesis defects. May be involved in the regulation of serine protease-dependent germ cell apoptosis. It also inhibits trypsin. This chain is Serine protease inhibitor Kazal-type 2 (Spink2), found in Rattus norvegicus (Rat).